The sequence spans 106 residues: Iron-sulfur cluster assembly protein CyaY (106 aa).

It belongs to the frataxin family.

Involved in iron-sulfur (Fe-S) cluster assembly. May act as a regulator of Fe-S biogenesis. The sequence is that of Iron-sulfur cluster assembly protein CyaY from Escherichia coli O6:H1 (strain CFT073 / ATCC 700928 / UPEC).